Here is a 140-residue protein sequence, read N- to C-terminus: MTSISSEYKLPEKTNTVSTNNSSLGKDEFLKILMTQVQNQDPLNPIDDKEFISQMATFSSLEQMMNLNTTMTQFVENQDPFTTYVDWMGKEVSWTDGKSATDKTGTVSSVKHFKGNYYLVLDDGTEISPANVMSVGQSSK.

The segment at 1-21 (MTSISSEYKLPEKTNTVSTNN) is disordered.

Belongs to the FlgD family.

This is FlaA locus uncharacterized protein YlxG (ylxG) from Bacillus subtilis (strain 168).